The primary structure comprises 217 residues: Grancalcin (217 aa).

4 EF-hand domains span residues 48–83 (SSAG…SGIN), 89–122 (FSLE…AALN), 119–154 (AALN…MGYR), and 155–180 (LSPQ…DYVA). Asp-65, Asp-69, and Glu-71 together coordinate Ca(2+). Residues Asp-132, Asp-134, Ser-136, Thr-138, and Glu-143 each coordinate Ca(2+).

In terms of assembly, homodimer. Interacts with SRI and LCP1. Detected in neutrophils and macrophages (at protein level). Highly expressed in bone marrow.

It is found in the cytoplasm. The protein resides in the cytoplasmic granule membrane. In terms of biological role, calcium-binding protein that may play a role in the adhesion of neutrophils to fibronectin. May play a role in the formation of focal adhesions. In Homo sapiens (Human), this protein is Grancalcin (GCA).